Here is an 838-residue protein sequence, read N- to C-terminus: Probable inorganic carbon transporter subunit DabA (838 aa).

Cys353, Asp355, His537, and Cys552 together coordinate Zn(2+).

Belongs to the inorganic carbon transporter (TC 9.A.2) DabA family. As to quaternary structure, forms a complex with DabB. Zn(2+) is required as a cofactor.

The protein resides in the cell membrane. Its function is as follows. Part of an energy-coupled inorganic carbon pump. In Roseiflexus sp. (strain RS-1), this protein is Probable inorganic carbon transporter subunit DabA.